The sequence spans 353 residues: Glutamate 5-kinase (353 aa).

An ATP-binding site is contributed by lysine 8. Residues serine 47, aspartate 134, and asparagine 146 each contribute to the substrate site. An ATP-binding site is contributed by 198 to 204; it reads TGGIRSK. The PUA domain maps to 262–339; the sequence is AGKIYVNKGA…SDLKKILGYE (78 aa).

It belongs to the glutamate 5-kinase family.

It is found in the cytoplasm. The catalysed reaction is L-glutamate + ATP = L-glutamyl 5-phosphate + ADP. The protein operates within amino-acid biosynthesis; L-proline biosynthesis; L-glutamate 5-semialdehyde from L-glutamate: step 1/2. Catalyzes the transfer of a phosphate group to glutamate to form L-glutamate 5-phosphate. In Thermotoga maritima (strain ATCC 43589 / DSM 3109 / JCM 10099 / NBRC 100826 / MSB8), this protein is Glutamate 5-kinase.